A 249-amino-acid chain; its full sequence is 1-(5-phosphoribosyl)-5-[(5-phosphoribosylamino)methylideneamino] imidazole-4-carboxamide isomerase (249 aa).

The active-site Proton acceptor is the D8. D129 serves as the catalytic Proton donor.

This sequence belongs to the HisA/HisF family.

Its subcellular location is the cytoplasm. The catalysed reaction is 1-(5-phospho-beta-D-ribosyl)-5-[(5-phospho-beta-D-ribosylamino)methylideneamino]imidazole-4-carboxamide = 5-[(5-phospho-1-deoxy-D-ribulos-1-ylimino)methylamino]-1-(5-phospho-beta-D-ribosyl)imidazole-4-carboxamide. It functions in the pathway amino-acid biosynthesis; L-histidine biosynthesis; L-histidine from 5-phospho-alpha-D-ribose 1-diphosphate: step 4/9. The protein is 1-(5-phosphoribosyl)-5-[(5-phosphoribosylamino)methylideneamino] imidazole-4-carboxamide isomerase of Nitratidesulfovibrio vulgaris (strain ATCC 29579 / DSM 644 / CCUG 34227 / NCIMB 8303 / VKM B-1760 / Hildenborough) (Desulfovibrio vulgaris).